Reading from the N-terminus, the 397-residue chain is Lysophospholipid transporter LplT (397 aa).

Residues 1–17 (MSESVHTNTSLWSKGMK) are Periplasmic-facing. Residues 18–38 (AVIVAQFLSAFGDNALLFATL) traverse the membrane as a helical segment. The Cytoplasmic portion of the chain corresponds to 39–52 (ALLKAQFYPEWSQP). A helical transmembrane segment spans residues 53-73 (ILQMVFVGAYILFAPFVGQVA). The Periplasmic segment spans residues 74–90 (DSFAKGRVMMFANGLKL). Residues 91 to 111 (LGAASICFGINPFLGYTLVGV) traverse the membrane as a helical segment. Over 112 to 144 (GAAAYSPAKYGILGELTTGSKLVKANGLMEAST) the chain is Cytoplasmic. Residues 145–165 (IAAILLGSVAGGVLADWHVLV) form a helical membrane-spanning segment. Alanine 166 is a topological domain (periplasmic). The chain crosses the membrane as a helical span at residues 167–187 (LAACALAYGGAVVANIYIPKL). Residues 188–226 (AAARPGQSWNLINMTRSFLNACTSLWRNGETRFSLVGTS) are Cytoplasmic-facing. A helical transmembrane segment spans residues 227–247 (LFWGAGVTLRFLLVLWVPVAL). Residues 248–256 (GITDNSTPT) lie on the Periplasmic side of the membrane. Residues 257–277 (YLNAMVAIGIVVGAGAAAKLV) form a helical membrane-spanning segment. Topologically, residues 278-280 (TLE) are cytoplasmic. The helical transmembrane segment at 281–301 (TVSRCMPAGILIGVVVLIFSL) threads the bilayer. At 302 to 304 (QHE) the chain is on the periplasmic side. Residues 305–325 (LLPAYALLMLIGVMGGFFVVP) form a helical membrane-spanning segment. The Cytoplasmic segment spans residues 326 to 343 (LNALLQERGKKSVGAGNA). Residues 344-364 (IAVQNLGENSAMLLMLGIYSL) form a helical membrane-spanning segment. Over 365–366 (AV) the chain is Periplasmic. A helical membrane pass occupies residues 367–387 (MVGIPVVPIGIGFGALFALAI). At 388–397 (TALWIWQRRH) the chain is on the cytoplasmic side.

This sequence belongs to the major facilitator superfamily. LplT (TC 2.A.1.42) family.

The protein localises to the cell inner membrane. Functionally, catalyzes the facilitated diffusion of 2-acyl-glycero-3-phosphoethanolamine (2-acyl-GPE) into the cell. The polypeptide is Lysophospholipid transporter LplT (Shigella boydii serotype 4 (strain Sb227)).